The sequence spans 265 residues: Inositol-1-monophosphatase (265 aa).

Mg(2+)-binding residues include Glu-69, Asp-87, Ile-89, and Asp-90. Glu-69 contacts substrate. Substrate is bound by residues 89–92, Arg-185, and Asp-214; that span reads IDGT. Asp-214 serves as a coordination point for Mg(2+).

Belongs to the inositol monophosphatase superfamily. It depends on Mg(2+) as a cofactor.

It catalyses the reaction a myo-inositol phosphate + H2O = myo-inositol + phosphate. The catalysed reaction is a ribonucleoside 5'-phosphate + H2O = a ribonucleoside + phosphate. Its function is as follows. Hydrolyzes myo-inositol monophosphate. Catalyzes the dephosphorylation of GMP and IMP. This chain is Inositol-1-monophosphatase, found in Bacillus subtilis (strain 168).